The following is a 360-amino-acid chain: Nucleoporin SEH1 (360 aa).

WD repeat units lie at residues 10–49 (DHKDLIHDVSFDFHGRRMATCSSDQSVKVWDKSESGDWHC), 55–96 (THSG…SNDK), 111–152 (DSRT…NLSQ), 160–210 (SCKL…RKYA), 217–258 (TVTD…KELT), and 276–315 (NHNSQVWRVSWNITGTVLASSGDDGCVRLWKANYMDNWKC). A Glycyl lysine isopeptide (Lys-Gly) (interchain with G-Cter in SUMO2) cross-link involves residue lysine 12. A phosphoserine mark is found at serine 179 and serine 190. Residues 324 to 354 (SPVNGSSQQGTSNPSLGSTIPSLQNSLNGSS) show a composition bias toward polar residues. Positions 324–360 (SPVNGSSQQGTSNPSLGSTIPSLQNSLNGSSAGRKHS) are disordered.

This sequence belongs to the WD repeat SEC13 family. Component of the Nup107-160 subcomplex of the nuclear pore complex (NPC). The Nup107-160 subcomplex includes NUP160, NUP133, NUP107, NUP98, NUP85, NUP43, NUP37, SEH1 and SEC13. The SEH1 subunit appears to be only weakly associated with the Nup107-160 subcomplex. Component of the GATOR2 subcomplex, composed of MIOS, SEC13, SEH1L, WDR24 and WDR59. The GATOR2 complex interacts with CASTOR1 and CASTOR2; the interaction is negatively regulated by arginine. The GATOR2 complex interacts with SESN1, SESN2 and SESN3; the interaction is negatively regulated by amino acids. SESN1, SESN2 and SESN3 convey leucine availability via direct interaction with SEH1L and WDR24.

It localises to the chromosome. It is found in the centromere. The protein localises to the kinetochore. Its subcellular location is the nucleus. The protein resides in the nuclear pore complex. It localises to the lysosome membrane. With respect to regulation, the GATOR2 complex is negatively regulated by the upstream amino acid sensors CASTOR1 and SESN2, which sequester the GATOR2 complex in absence of amino acids. In the presence of abundant amino acids, GATOR2 is released from CASTOR1 and SESN2 and activated. In terms of biological role, component of the Nup107-160 subcomplex of the nuclear pore complex (NPC). The Nup107-160 subcomplex is required for the assembly of a functional NPC. The Nup107-160 subcomplex is also required for normal kinetochore microtubule attachment, mitotic progression and chromosome segregation. This subunit plays a role in recruitment of the Nup107-160 subcomplex to the kinetochore. As a component of the GATOR2 complex, functions as an activator of the amino acid-sensing branch of the mTORC1 signaling pathway. The GATOR2 complex indirectly activates mTORC1 through the inhibition of the GATOR1 subcomplex. GATOR2 probably acts as an E3 ubiquitin-protein ligase toward GATOR1. In the presence of abundant amino acids, the GATOR2 complex mediates ubiquitination of the NPRL2 core component of the GATOR1 complex, leading to GATOR1 inactivation. In the absence of amino acids, GATOR2 is inhibited, activating the GATOR1 complex. Within the GATOR2 complex, SEC13 and SEH1L are required to stabilize the complex. The polypeptide is Nucleoporin SEH1 (SEH1L) (Homo sapiens (Human)).